A 1561-amino-acid polypeptide reads, in one-letter code: Rho GTPase-activating protein 190 (1561 aa).

4 FF domains span residues 252–320 (YQES…HMKK), 365–419 (YLQN…YLNS), 426–480 (KIGW…HQDD), and 482–547 (IEKS…HLRF). A pG1 pseudoGTPase domain is found at 592–765 (SGSDRTLNLL…EPYPSNHTDL (174 aa)). One can recognise a pG2 pseudoGTPase domain in the interval 766–926 (RILCCIFCGD…LKTAWDNKYE (161 aa)). Phosphoserine occurs at positions 973, 975, 985, 988, and 996. The tract at residues 1054–1074 (KIRPKGPSQTLKVGEAPSRNC) is disordered. The region spanning 1349-1552 (AQFGKLMITS…TMIDQFPYLF (204 aa)) is the Rho-GAP domain.

Its activity is regulated as follows. Negatively regulated by integrin, bsk and Src/Src64B. Its function is as follows. GTPase-activating protein (GAP) for RhoA/Rho1 that plays an essential role in the stability of dorsal branches of mushroom body (MB) neurons. The MB neurons are the center for olfactory learning and memory. Acts by converting RhoA/Rho1 to an inactive GDP-bound state, leading to repress the RhoA/Rho1-Drok-MRLC signaling pathway thereby maintaining axon branch stability. This is Rho GTPase-activating protein 190 (RhoGAPp190) from Drosophila melanogaster (Fruit fly).